We begin with the raw amino-acid sequence, 244 residues long: Uridylate kinase (244 aa).

19-22 contacts ATP; it reads KVSG. The interval 27 to 32 is involved in allosteric activation by GTP; sequence GERGFG. Gly61 contacts UMP. The ATP site is built by Gly62 and Arg66. Residues Asp80 and 141–148 each bind UMP; that span reads IGSPFFTT. Residues Thr168, Gln169, Tyr174, and Asp177 each coordinate ATP.

Belongs to the UMP kinase family. Homohexamer.

The protein resides in the cytoplasm. The catalysed reaction is UMP + ATP = UDP + ADP. The protein operates within pyrimidine metabolism; CTP biosynthesis via de novo pathway; UDP from UMP (UMPK route): step 1/1. Its activity is regulated as follows. Allosterically activated by GTP. Inhibited by UTP. In terms of biological role, catalyzes the reversible phosphorylation of UMP to UDP. The sequence is that of Uridylate kinase from Anaplasma phagocytophilum (strain HZ).